A 717-amino-acid polypeptide reads, in one-letter code: Polyribonucleotide nucleotidyltransferase (717 aa).

2 residues coordinate Mg(2+): D488 and D494. The KH domain occupies 555–614 (PRIEVMNIPVDKIREVIGSGGKVIREIVEKTGAKINIDDDGTVKIASASAKEIEAARKWI). The S1 motif domain occupies 624–692 (GQVYEGTVVK…ERGKVRLSMK (69 aa)).

Belongs to the polyribonucleotide nucleotidyltransferase family. Mg(2+) serves as cofactor.

It is found in the cytoplasm. The enzyme catalyses RNA(n+1) + phosphate = RNA(n) + a ribonucleoside 5'-diphosphate. Its function is as follows. Involved in mRNA degradation. Catalyzes the phosphorolysis of single-stranded polyribonucleotides processively in the 3'- to 5'-direction. This chain is Polyribonucleotide nucleotidyltransferase, found in Rhizobium meliloti (strain 1021) (Ensifer meliloti).